The chain runs to 377 residues: Leukocyte elastase inhibitor (377 aa).

At Met-1 the chain carries N-acetylmethionine.

This sequence belongs to the serpin family. Ov-serpin subfamily.

It localises to the cytoplasm. Functionally, regulates the activity of the neutrophil proteases. The polypeptide is Leukocyte elastase inhibitor (serpinb1) (Xenopus laevis (African clawed frog)).